Reading from the N-terminus, the 284-residue chain is 2,3,4,5-tetrahydropyridine-2,6-dicarboxylate N-succinyltransferase (284 aa).

Residues arginine 111 and aspartate 148 each coordinate substrate.

It belongs to the transferase hexapeptide repeat family. As to quaternary structure, homotrimer.

The protein localises to the cytoplasm. The enzyme catalyses (S)-2,3,4,5-tetrahydrodipicolinate + succinyl-CoA + H2O = (S)-2-succinylamino-6-oxoheptanedioate + CoA. It participates in amino-acid biosynthesis; L-lysine biosynthesis via DAP pathway; LL-2,6-diaminopimelate from (S)-tetrahydrodipicolinate (succinylase route): step 1/3. This chain is 2,3,4,5-tetrahydropyridine-2,6-dicarboxylate N-succinyltransferase, found in Brucella suis (strain ATCC 23445 / NCTC 10510).